We begin with the raw amino-acid sequence, 457 residues long: Glutamate--tRNA ligase 2 (457 aa).

Positions 8–18 (PSPTGYIHIGN) match the 'HIGH' region motif. The 'KMSKS' region signature appears at 249 to 253 (GFSKR). Lysine 252 contacts ATP.

Belongs to the class-I aminoacyl-tRNA synthetase family. Glutamate--tRNA ligase type 1 subfamily. As to quaternary structure, monomer.

It is found in the cytoplasm. The enzyme catalyses tRNA(Glu) + L-glutamate + ATP = L-glutamyl-tRNA(Glu) + AMP + diphosphate. Functionally, catalyzes the attachment of glutamate to tRNA(Glu) in a two-step reaction: glutamate is first activated by ATP to form Glu-AMP and then transferred to the acceptor end of tRNA(Glu). This is Glutamate--tRNA ligase 2 from Bartonella tribocorum (strain CIP 105476 / IBS 506).